Reading from the N-terminus, the 249-residue chain is Thioesterase TesA (249 aa).

Active-site residues include serine 92, aspartate 196, and histidine 224.

Belongs to the thioesterase family.

It catalyses the reaction a fatty acyl-CoA + H2O = a fatty acid + CoA + H(+). Functionally, involved in the synthesis of both phthiocerol dimycocerosates (PDIMs) and phenolic glycolipids (PGLs), which are structurally related lipids non-covalently bound to the outer cell wall layer of M.tuberculosis and are important virulence factors. This Mycobacterium marinum (strain ATCC BAA-535 / M) protein is Thioesterase TesA.